A 254-amino-acid polypeptide reads, in one-letter code: Very-long-chain (3R)-3-hydroxyacyl-CoA dehydratase 2 (254 aa).

Low complexity predominate over residues 1 to 10 (MAAAAATAAT). The disordered stretch occupies residues 1–34 (MAAAAATAATKGNGGGSGRVGAGDSSGARKKKGP). An N-acetylalanine modification is found at Ala-2. Residues 2–41 (AAAAATAATKGNGGGSGRVGAGDSSGARKKKGPGPVATAY) are Cytoplasmic-facing. Gly residues predominate over residues 12–21 (GNGGGSGRVG). The helical transmembrane segment at 42 to 60 (LVIYNVVMTAGWLVIAVGL) threads the bilayer. The Lumenal segment spans residues 61-79 (VRAYLAKGSYHSLYYSIER). Residues 80-97 (PLKFFQTGALLEILHCAI) form a helical membrane-spanning segment. The Cytoplasmic portion of the chain corresponds to 98 to 107 (GIVPSSVVLT). The helical transmembrane segment at 108-125 (SFQVMSRVFLIWAVTHSV) threads the bilayer. Residues 126-130 (KEVQS) are Lumenal-facing. A helical transmembrane segment spans residues 131–146 (EDSVLLFVIAWTITEI). Residues 147 to 169 (IRYSFYTFSLLNHLPYIIKWARY) lie on the Cytoplasmic side of the membrane. The helical transmembrane segment at 170-187 (TLFIVLYPMGVTGELLTI) threads the bilayer. Active-site residues include Tyr-176 and Glu-183. At 188–217 (YAALPFVRQAGLYSISLPNKYNFSFDYHAF) the chain is on the lumenal side. Residues 198–214 (GLYSISLPNKYNFSFDY) form a may be involved in interaction with TECR region. Asn-209 carries an N-linked (GlcNAc...) asparagine glycan. Residues 218–235 (LILIMISYIPLFPQLYFH) form a helical membrane-spanning segment. Residues 236-254 (MIHQRRKVLSHTEEHKKFE) are Cytoplasmic-facing.

It belongs to the very long-chain fatty acids dehydratase HACD family. As to quaternary structure, may interact with enzymes of the ELO family (including ELOVL1); with those enzymes that mediate condensation, the first of the four steps of the reaction cycle responsible for fatty acids elongation, may be part of a larger fatty acids elongase complex. Interacts with BCAP31. Interacts with TECR.

It is found in the endoplasmic reticulum membrane. The enzyme catalyses a very-long-chain (3R)-3-hydroxyacyl-CoA = a very-long-chain (2E)-enoyl-CoA + H2O. The catalysed reaction is (3R)-hydroxyhexadecanoyl-CoA = (2E)-hexadecenoyl-CoA + H2O. It carries out the reaction (3R)-hydroxyoctadecanoyl-CoA = (2E)-octadecenoyl-CoA + H2O. It catalyses the reaction (3R)-hydroxyeicosanoyl-CoA = (2E)-eicosenoyl-CoA + H2O. The enzyme catalyses (3R)-hydroxydocosanoyl-CoA = (2E)-docosenoyl-CoA + H2O. The catalysed reaction is (3R)-hydroxytetracosanoyl-CoA = (2E)-tetracosenoyl-CoA + H2O. It carries out the reaction (3R)-hydroxyhexacosanoyl-CoA = (2E)-hexacosenoyl-CoA + H2O. It functions in the pathway lipid metabolism; fatty acid biosynthesis. In terms of biological role, catalyzes the third of the very long-chain fatty acids (VLCFA) elongation four-step cycle (condensation, reduction, dehydration, and reduction). This endoplasmic reticulum-elongation process is characterized by the addition of two carbons to the lipid chain through each cycle. This enzyme catalyzes the dehydration of the 3-hydroxyacyl-CoA intermediate into trans-2,3-enoyl-CoA, within each cycle of elongation. Therefore, it participates in the production of various VLCFAs involved in multiple biological processes as precursors of membrane lipids and lipid mediators. This Mus musculus (Mouse) protein is Very-long-chain (3R)-3-hydroxyacyl-CoA dehydratase 2.